A 370-amino-acid polypeptide reads, in one-letter code: sn-glycerol-3-phosphate import ATP-binding protein UgpC (370 aa).

Positions 4-236 (LSLKNIAKRY…PATAFVAAFM (233 aa)) constitute an ABC transporter domain. 38–45 (GPSGCGKS) is a binding site for ATP.

The protein belongs to the ABC transporter superfamily. sn-glycerol-3-phosphate importer (TC 3.A.1.1.3) family. As to quaternary structure, the complex is composed of two ATP-binding proteins (UgpC), two transmembrane proteins (UgpA and UgpE) and a solute-binding protein (UgpB).

The protein resides in the cell inner membrane. It catalyses the reaction sn-glycerol 3-phosphate(out) + ATP + H2O = sn-glycerol 3-phosphate(in) + ADP + phosphate + H(+). Its function is as follows. Part of the ABC transporter complex UgpBAEC involved in sn-glycerol-3-phosphate (G3P) import. Responsible for energy coupling to the transport system. The sequence is that of sn-glycerol-3-phosphate import ATP-binding protein UgpC from Chromobacterium violaceum (strain ATCC 12472 / DSM 30191 / JCM 1249 / CCUG 213 / NBRC 12614 / NCIMB 9131 / NCTC 9757 / MK).